We begin with the raw amino-acid sequence, 249 residues long: Sesquipedalian-1 (249 aa).

In terms of domain architecture, PH spans 17 to 113 (PVDNAGFLYK…WVKALSRASF (97 aa)). 2 disordered regions span residues 134 to 159 (GGMA…LAPV) and 194 to 219 (EATF…HGPL). Residues 140–152 (QPQPQSLPLPPSL) show a composition bias toward pro residues. Ser-213 is modified (phosphoserine). A F&amp;H motif is present at residues 223–235 (PFARLHECYGQEI).

The protein belongs to the sesquipedalian family. As to quaternary structure, forms homodimers and heterodimers with PHETA2. Interacts with OCRL and INPP5B. Interaction with OCRL may be important for endosomal morphology and function.

It localises to the early endosome. It is found in the recycling endosome. Its subcellular location is the golgi apparatus. The protein localises to the trans-Golgi network. The protein resides in the cytoplasmic vesicle. It localises to the clathrin-coated vesicle. Its function is as follows. Plays a role in endocytic trafficking. Required for receptor recycling from endosomes, both to the trans-Golgi network and the plasma membrane. The sequence is that of Sesquipedalian-1 from Homo sapiens (Human).